The chain runs to 140 residues: Large ribosomal subunit protein uL14 (140 aa).

It belongs to the universal ribosomal protein uL14 family.

The sequence is that of Large ribosomal subunit protein uL14 (RPL23) from Nicotiana tabacum (Common tobacco).